Reading from the N-terminus, the 176-residue chain is Small ribosomal subunit protein uS5 (176 aa).

The region spanning 11–74 is the S5 DRBM domain; the sequence is LSEVLVDVNR…QAAKKRMMKV (64 aa).

It belongs to the universal ribosomal protein uS5 family. Part of the 30S ribosomal subunit. Contacts proteins S4 and S8.

In terms of biological role, with S4 and S12 plays an important role in translational accuracy. Functionally, located at the back of the 30S subunit body where it stabilizes the conformation of the head with respect to the body. In Rickettsia rickettsii (strain Iowa), this protein is Small ribosomal subunit protein uS5.